A 331-amino-acid polypeptide reads, in one-letter code: Ribose operon repressor (331 aa).

The region spanning 1 to 56 is the HTH lacI-type domain; the sequence is MTTIRDVAKHAKVSVATVSRVLNKKGYVSKEAEEAVLQAIKELNYQPSSVARSLYH. Residues 4–23 constitute a DNA-binding region (H-T-H motif); that stretch reads IRDVAKHAKVSVATVSRVLN.

Functionally, transcriptional repressor for the ribose rbsDACBK operon. The chain is Ribose operon repressor (rbsR) from Halalkalibacterium halodurans (strain ATCC BAA-125 / DSM 18197 / FERM 7344 / JCM 9153 / C-125) (Bacillus halodurans).